The following is a 1043-amino-acid chain: Unconventional myosin-Ia (1043 aa).

In terms of domain architecture, Myosin motor spans 8-694 (VGVEDLILLE…TLFYLEEQRR (687 aa)). 101 to 108 (GESGAGKT) provides a ligand contact to ATP. The segment at 571-593 (VAVLMKNLYSKNPNYIRCIKPND) is actin-binding. IQ domains are found at residues 697 to 719 (LQQL…HYQQ), 720 to 742 (MRKS…HYGK), and 743 to 772 (IRSS…SGAA). The TH1 domain occupies 858–1042 (KASYPQSVPI…KGSNAMEVTV (185 aa)).

It belongs to the TRAFAC class myosin-kinesin ATPase superfamily. Myosin family. In terms of processing, phosphorylated by ALPK1.

Involved in directing the movement of organelles along actin filaments. This is Unconventional myosin-Ia (Myo1a) from Mus musculus (Mouse).